A 194-amino-acid polypeptide reads, in one-letter code: A-type ATP synthase subunit E (194 aa).

The tract at residues 35–56 (DAEADADQIREEREAEVERTIE) is disordered. The segment covering 41 to 56 (DQIREEREAEVERTIE) has biased composition (basic and acidic residues).

This sequence belongs to the V-ATPase E subunit family. As to quaternary structure, has multiple subunits with at least A(3), B(3), C, D, E, F, H, I and proteolipid K(x).

Its subcellular location is the cell membrane. In terms of biological role, component of the A-type ATP synthase that produces ATP from ADP in the presence of a proton gradient across the membrane. The protein is A-type ATP synthase subunit E of Haloarcula marismortui (strain ATCC 43049 / DSM 3752 / JCM 8966 / VKM B-1809) (Halobacterium marismortui).